Here is a 93-residue protein sequence, read N- to C-terminus: MKFPADSNLILIMPGHARYRDPKTFEMSPALVRVRAPYFWRNTLAFIVVGSIPLGVYAYTWSFLNKDEFSDIPIPPVSDEELAKLKKEYANKK.

At M1–T43 the chain is on the mitochondrial matrix side. A helical transmembrane segment spans residues L44–L64. The Mitochondrial intermembrane segment spans residues N65–K93.

It belongs to the COA3 family. Component of 250-400 kDa complexes called cytochrome oxidase assembly intermediates or COA complexes.

The protein localises to the mitochondrion inner membrane. In terms of biological role, required for assembly of cytochrome c oxidase (complex IV). This is Cytochrome c oxidase assembly factor 3, mitochondrial (COA3) from Meyerozyma guilliermondii (strain ATCC 6260 / CBS 566 / DSM 6381 / JCM 1539 / NBRC 10279 / NRRL Y-324) (Yeast).